Consider the following 168-residue polypeptide: Putative postmeiotic segregation increased 2-like protein 3 (168 aa).

Residues 8-84 (VSFKDVAVDF…EGEFPCQHSP (77 aa)) enclose the KRAB domain.

Belongs to the DNA mismatch repair MutL/HexB family.

In Homo sapiens (Human), this protein is Putative postmeiotic segregation increased 2-like protein 3 (PMS2P3).